Consider the following 230-residue polypeptide: V-type proton ATPase subunit E1 (230 aa).

An N-acetylmethionine modification is found at Met1. A coiled-coil region spans residues 8–67 (RQIQQMVRFIRQEAEEKANEISVSAEEEFNIEKLQLVEAEKKKIRQDYEKKEKQADVRKK). Residue Ser178 is modified to Phosphoserine.

The protein belongs to the V-ATPase E subunit family. V-ATPase is a heteromultimeric enzyme composed of a peripheral catalytic V1 complex (components A to H) attached to an integral membrane V0 proton pore complex (components: a, c, c'', d and e).

The protein localises to the vacuole membrane. In terms of biological role, subunit of the peripheral V1 complex of vacuolar ATPase essential for assembly or catalytic function. V-ATPase is responsible for acidifying a variety of intracellular compartments in eukaryotic cells. Required for Golgi organization and vacuole function in embryogenesis. In Arabidopsis thaliana (Mouse-ear cress), this protein is V-type proton ATPase subunit E1 (VHA-E1).